We begin with the raw amino-acid sequence, 599 residues long: Proteasome-associated ATPase (599 aa).

Residues 1–22 are disordered; the sequence is MPHGHPGSQPDEGGELSNGSSS. Residues 21–97 adopt a coiled-coil conformation; the sequence is SSGELTAQIR…LREEVDRLAQ (77 aa). 286-291 provides a ligand contact to ATP; it reads GCGKTL. Positions 598 to 599 are docks into pockets in the proteasome alpha-ring; sequence YL.

Belongs to the AAA ATPase family. Homohexamer. Assembles into a hexameric ring structure that caps the 20S proteasome core. Strongly interacts with the prokaryotic ubiquitin-like protein Pup through a hydrophobic interface; the interacting region of ARC lies in its N-terminal coiled-coil domain. There is one Pup binding site per ARC hexamer ring. Upon ATP-binding, the C-terminus of ARC interacts with the alpha-rings of the proteasome core, possibly by binding to the intersubunit pockets.

Its pathway is protein degradation; proteasomal Pup-dependent pathway. Its function is as follows. ATPase which is responsible for recognizing, binding, unfolding and translocation of pupylated proteins into the bacterial 20S proteasome core particle. May be essential for opening the gate of the 20S proteasome via an interaction with its C-terminus, thereby allowing substrate entry and access to the site of proteolysis. Thus, the C-termini of the proteasomal ATPase may function like a 'key in a lock' to induce gate opening and therefore regulate proteolysis. The protein is Proteasome-associated ATPase of Actinosynnema mirum (strain ATCC 29888 / DSM 43827 / JCM 3225 / NBRC 14064 / NCIMB 13271 / NRRL B-12336 / IMRU 3971 / 101).